The sequence spans 647 residues: 1-deoxy-D-xylulose-5-phosphate synthase (647 aa).

Thiamine diphosphate-binding positions include H88 and 129–131; that span reads GHA. D160 lines the Mg(2+) pocket. Thiamine diphosphate is bound by residues 161-162, N189, Y300, and E377; that span reads GA. A Mg(2+)-binding site is contributed by N189.

It belongs to the transketolase family. DXPS subfamily. As to quaternary structure, homodimer. Mg(2+) is required as a cofactor. Requires thiamine diphosphate as cofactor.

It catalyses the reaction D-glyceraldehyde 3-phosphate + pyruvate + H(+) = 1-deoxy-D-xylulose 5-phosphate + CO2. It functions in the pathway metabolic intermediate biosynthesis; 1-deoxy-D-xylulose 5-phosphate biosynthesis; 1-deoxy-D-xylulose 5-phosphate from D-glyceraldehyde 3-phosphate and pyruvate: step 1/1. Catalyzes the acyloin condensation reaction between C atoms 2 and 3 of pyruvate and glyceraldehyde 3-phosphate to yield 1-deoxy-D-xylulose-5-phosphate (DXP). This chain is 1-deoxy-D-xylulose-5-phosphate synthase, found in Dehalococcoides mccartyi (strain ATCC BAA-2266 / KCTC 15142 / 195) (Dehalococcoides ethenogenes (strain 195)).